The primary structure comprises 147 residues: Small ribosomal subunit protein uS12 (147 aa).

This sequence belongs to the universal ribosomal protein uS12 family. Part of the 30S ribosomal subunit.

Functionally, with S4 and S5 plays an important role in translational accuracy. Located at the interface of the 30S and 50S subunits. The sequence is that of Small ribosomal subunit protein uS12 from Pyrococcus horikoshii (strain ATCC 700860 / DSM 12428 / JCM 9974 / NBRC 100139 / OT-3).